The primary structure comprises 405 residues: Accessory Sec system protein translocase subunit SecY2 (405 aa).

10 helical membrane passes run 14–34 (LFTL…LPFV), 63–83 (LSIF…WQMF), 104–124 (MYLT…RLPV), 131–151 (ILVV…LVWL), 156–176 (ASMG…LNIP), 191–211 (GIIV…ALMY), 247–267 (MYVM…GFIF), 285–305 (PLWV…FAFV), 343–363 (FSVI…LFVL), and 368–388 (LLRL…IFTI).

This sequence belongs to the SecY/SEC61-alpha family. SecY2 subfamily. In terms of assembly, component of the accessory SecA2/SecY2 protein translocase complex required to export cell wall proteins. May form heterotrimers with SecE and SecG subunits.

Its subcellular location is the cell membrane. Part of the accessory SecA2/SecY2 system specifically required for export of possible cell wall proteins. The central subunit of a protein translocation channel. The protein is Accessory Sec system protein translocase subunit SecY2 of Streptococcus pneumoniae (strain CGSP14).